We begin with the raw amino-acid sequence, 161 residues long: Ribosome maturation factor RimP (161 aa).

The protein belongs to the RimP family.

It localises to the cytoplasm. Its function is as follows. Required for maturation of 30S ribosomal subunits. This is Ribosome maturation factor RimP from Myxococcus xanthus (strain DK1622).